The sequence spans 303 residues: Probable cell division protein WhiA (303 aa).

Residues 272–303 constitute a DNA-binding region (H-T-H motif); the sequence is SIQQIADSLETPLSKSGVNHRLRKINKIADEL.

This sequence belongs to the WhiA family.

Functionally, involved in cell division and chromosome segregation. The protein is Probable cell division protein WhiA of Streptococcus agalactiae serotype Ia (strain ATCC 27591 / A909 / CDC SS700).